The sequence spans 726 residues: Methionine--tRNA ligase (726 aa).

Residues 12–22 carry the 'HIGH' region motif; that stretch reads PYVNNIPHLGN. Residues Cys-143, Cys-146, Cys-155, and Cys-158 each contribute to the Zn(2+) site. Positions 330–334 match the 'KMSKS' region motif; the sequence is KFSKS. Lys-333 contacts ATP. The tRNA-binding domain maps to 562-667; that stretch reads FSEKVCLKVV…DNPIPGERII (106 aa).

This sequence belongs to the class-I aminoacyl-tRNA synthetase family. MetG type 1 subfamily. Homodimer. Requires Zn(2+) as cofactor.

The protein resides in the cytoplasm. It catalyses the reaction tRNA(Met) + L-methionine + ATP = L-methionyl-tRNA(Met) + AMP + diphosphate. Its function is as follows. Is required not only for elongation of protein synthesis but also for the initiation of all mRNA translation through initiator tRNA(fMet) aminoacylation. This chain is Methionine--tRNA ligase, found in Borrelia turicatae (strain 91E135).